We begin with the raw amino-acid sequence, 631 residues long: MASPGASTVFLLALTILAGTQALTPTHYLTKPDVERLRASLDRPFTSLESAFYSIVGLSSLGVQVPDVKKACAFIKSNLDPGNVDSLFYAAQSSQALSGCEISISNETKDLLLAAVSEDSSVTQIYHAVAALSGFGLPLASQEALSALTARLSKEETVLATVQALQTASHLSQQADLRSIVEEIEDLVARLDELGGVYLQFEEGLETTALFVAATYKLMDHVGTEPSIKEDQVIQLMNAIFSKKNFESLSEAFSVASAAAALSQNRYHVPVVVVPEGTPSDTHEQAILRLQVTNVLSQPLTQATVKLEHAKSVASRATVLQKTSFTPVGDVFELNFMNVKFSSGYYDFSVKVEGDNRYIANSVELRVKISTEVGITNVDLSTVDKDQSIAPKTTRVTYPAKAKGTFIADSHQNFALFFQLVDVNTGAELTPHQTFVRLHNQKTGQEVVFVAEPDSKNVYKFELDTSERKIEFDSASGTYTLYLIIGDATLKNPILWNVADVVIKFPEEDAPSTVLSKNLFTPKQEIQHLFREPEKRPPTVVSNTFTALILSPLLLLFALWIRIGANVSNFTFAPSTIIFHLGHAAMLGLMYVYWTQLNMFQTLKYLAILGSVTFLAGNRMLAQQAIKRTAH.

An N-terminal signal peptide occupies residues 1-22 (MASPGASTVFLLALTILAGTQA). Topologically, residues 23 to 540 (LTPTHYLTKP…REPEKRPPTV (518 aa)) are lumenal. Asn106 carries N-linked (GlcNAc...) asparagine glycosylation. Lys154 is covalently cross-linked (Glycyl lysine isopeptide (Lys-Gly) (interchain with G-Cter in ubiquitin)). The helical transmembrane segment at 541–561 (VSNTFTALILSPLLLLFALWI) threads the bilayer. Residues 562–571 (RIGANVSNFT) are Cytoplasmic-facing. Residues 572–592 (FAPSTIIFHLGHAAMLGLMYV) form a helical membrane-spanning segment. The Lumenal portion of the chain corresponds to 593 to 596 (YWTQ). Residues 597 to 617 (LNMFQTLKYLAILGSVTFLAG) form a helical membrane-spanning segment. Topologically, residues 618 to 631 (NRMLAQQAIKRTAH) are cytoplasmic.

Belongs to the SWP1 family. Component of the oligosaccharyltransferase (OST) complex. OST exists in two different complex forms which contain common core subunits RPN1, RPN2, OST48, OST4, DAD1 and TMEM258, either STT3A or STT3B as catalytic subunits, and form-specific accessory subunits. STT3A complex assembly occurs through the formation of 3 subcomplexes. Subcomplex 1 contains RPN1 and TMEM258, subcomplex 2 contains the STT3A-specific subunits STT3A, DC2/OSTC, and KCP2 as well as the core subunit OST4, and subcomplex 3 contains RPN2, DAD1, and OST48. The STT3A complex can form stable complexes with the Sec61 complex or with both the Sec61 and TRAP complexes. Interacts with DDI2. Interacts with TMEM35A/NACHO.

It localises to the endoplasmic reticulum. The protein resides in the endoplasmic reticulum membrane. The protein operates within protein modification; protein glycosylation. Functionally, subunit of the oligosaccharyl transferase (OST) complex that catalyzes the initial transfer of a defined glycan (Glc(3)Man(9)GlcNAc(2) in eukaryotes) from the lipid carrier dolichol-pyrophosphate to an asparagine residue within an Asn-X-Ser/Thr consensus motif in nascent polypeptide chains, the first step in protein N-glycosylation. N-glycosylation occurs cotranslationally and the complex associates with the Sec61 complex at the channel-forming translocon complex that mediates protein translocation across the endoplasmic reticulum (ER). All subunits are required for a maximal enzyme activity. The polypeptide is Dolichyl-diphosphooligosaccharide--protein glycosyltransferase subunit 2 (Canis lupus familiaris (Dog)).